The chain runs to 415 residues: ATP-dependent Clp protease ATP-binding subunit ClpX (415 aa).

In terms of domain architecture, ClpX-type ZB spans 1-54 (MARNRMGGALICSFCNKPESSERFVVPGPGGIAICDRCVDLCESYIKSYKTVRP). Residues cysteine 12, cysteine 15, cysteine 35, and cysteine 38 each contribute to the Zn(2+) site. Residue 117 to 124 (PTGSGKTL) participates in ATP binding.

Belongs to the ClpX chaperone family. As to quaternary structure, component of the ClpX-ClpP complex. Forms a hexameric ring that, in the presence of ATP, binds to fourteen ClpP subunits assembled into a disk-like structure with a central cavity, resembling the structure of eukaryotic proteasomes.

In terms of biological role, ATP-dependent specificity component of the Clp protease. It directs the protease to specific substrates. Can perform chaperone functions in the absence of ClpP. In Treponema denticola (strain ATCC 35405 / DSM 14222 / CIP 103919 / JCM 8153 / KCTC 15104), this protein is ATP-dependent Clp protease ATP-binding subunit ClpX.